The sequence spans 116 residues: Putative iron-sulfur cluster insertion protein ErpA (116 aa).

Residues cysteine 44, cysteine 108, and cysteine 110 each contribute to the iron-sulfur cluster site.

This sequence belongs to the HesB/IscA family. Homodimer. The cofactor is iron-sulfur cluster.

Its function is as follows. Required for insertion of 4Fe-4S clusters. This chain is Putative iron-sulfur cluster insertion protein ErpA, found in Herminiimonas arsenicoxydans.